The following is a 593-amino-acid chain: BBSome complex member BBS1 (593 aa).

Position 2 is an N-acetylalanine (Ala-2).

As to quaternary structure, part of BBSome complex, that contains BBS1, BBS2, BBS4, BBS5, BBS7, BBS8/TTC8, BBS9 and BBIP10. Interacts with the C-terminus of RAB3IP. Interacts with CCDC28B and ALDOB. Interacts with PKD1. In terms of tissue distribution, highly expressed in the kidney. Also found in fetal tissue, testis, retina, adipose tissue, heart, skeletal muscle and pancreas.

It localises to the cell projection. It is found in the cilium membrane. The protein resides in the cytoplasm. The protein localises to the cytoskeleton. Its subcellular location is the microtubule organizing center. It localises to the centrosome. It is found in the centriolar satellite. Its function is as follows. The BBSome complex is thought to function as a coat complex required for sorting of specific membrane proteins to the primary cilia. The BBSome complex is required for ciliogenesis but is dispensable for centriolar satellite function. This ciliogenic function is mediated in part by the Rab8 GDP/GTP exchange factor, which localizes to the basal body and contacts the BBSome. Rab8(GTP) enters the primary cilium and promotes extension of the ciliary membrane. Firstly the BBSome associates with the ciliary membrane and binds to RAB3IP/Rabin8, the guanosyl exchange factor (GEF) for Rab8 and then the Rab8-GTP localizes to the cilium and promotes docking and fusion of carrier vesicles to the base of the ciliary membrane. The BBSome complex, together with the LTZL1, controls SMO ciliary trafficking and contributes to the sonic hedgehog (SHH) pathway regulation. Required for proper BBSome complex assembly and its ciliary localization. Plays a role in olfactory cilium biogenesis/maintenance and trafficking. The chain is BBSome complex member BBS1 (BBS1) from Homo sapiens (Human).